Consider the following 166-residue polypeptide: Small ribosomal subunit protein uS5 (166 aa).

Positions 12 to 75 (YIEKLVQVNR…EAARRNMIQV (64 aa)) constitute an S5 DRBM domain.

This sequence belongs to the universal ribosomal protein uS5 family. As to quaternary structure, part of the 30S ribosomal subunit. Contacts proteins S4 and S8.

With S4 and S12 plays an important role in translational accuracy. Functionally, located at the back of the 30S subunit body where it stabilizes the conformation of the head with respect to the body. The sequence is that of Small ribosomal subunit protein uS5 from Pseudomonas fluorescens (strain ATCC BAA-477 / NRRL B-23932 / Pf-5).